Consider the following 483-residue polypeptide: Argininosuccinate lyase (483 aa).

The protein belongs to the lyase 1 family. Argininosuccinate lyase subfamily.

The protein resides in the cytoplasm. The catalysed reaction is 2-(N(omega)-L-arginino)succinate = fumarate + L-arginine. Its pathway is amino-acid biosynthesis; L-arginine biosynthesis; L-arginine from L-ornithine and carbamoyl phosphate: step 3/3. In Albidiferax ferrireducens (strain ATCC BAA-621 / DSM 15236 / T118) (Rhodoferax ferrireducens), this protein is Argininosuccinate lyase.